We begin with the raw amino-acid sequence, 219 residues long: Cysteine dioxygenase (219 aa).

The Fe cation site is built by His-106, His-108, and His-166. The segment at residues 113–183 (CVMKILHGSL…NDFAISLHLY (71 aa)) is a cross-link (3'-(S-cysteinyl)-tyrosine (Cys-Tyr)).

The protein belongs to the cysteine dioxygenase family. It depends on Fe cation as a cofactor. Post-translationally, the thioether cross-link between Cys-113 and Tyr-183 plays a structural role through stabilizing the Fe(2+) ion, and prevents the production of highly damaging free hydroxyl radicals by holding the oxygen radical via hydroxyl hydrogen.

The enzyme catalyses L-cysteine + O2 = 3-sulfino-L-alanine + H(+). Cysteine dioxygenase involved in sulfite formation from cysteine. Required for keratin degradation and plays an important role in filamentous growth and virulence. The sequence is that of Cysteine dioxygenase from Arthroderma benhamiae (Trichophyton mentagrophytes).